The chain runs to 67 residues: DNA gyrase inhibitor YacG (67 aa).

Residues Cys9, Cys12, Cys28, and Cys32 each coordinate Zn(2+). Residues 48–67 (PVSPDAEDELFSEELPPRAH) are disordered.

It belongs to the DNA gyrase inhibitor YacG family. As to quaternary structure, interacts with GyrB. It depends on Zn(2+) as a cofactor.

Its function is as follows. Inhibits all the catalytic activities of DNA gyrase by preventing its interaction with DNA. Acts by binding directly to the C-terminal domain of GyrB, which probably disrupts DNA binding by the gyrase. The sequence is that of DNA gyrase inhibitor YacG from Pseudomonas fluorescens (strain ATCC BAA-477 / NRRL B-23932 / Pf-5).